A 354-amino-acid chain; its full sequence is Uroporphyrinogen decarboxylase (354 aa).

Substrate-binding positions include 27–31, D77, Y154, S209, and H327; that span reads RQAGR.

This sequence belongs to the uroporphyrinogen decarboxylase family. In terms of assembly, homodimer.

It localises to the cytoplasm. It carries out the reaction uroporphyrinogen III + 4 H(+) = coproporphyrinogen III + 4 CO2. The protein operates within porphyrin-containing compound metabolism; protoporphyrin-IX biosynthesis; coproporphyrinogen-III from 5-aminolevulinate: step 4/4. Catalyzes the decarboxylation of four acetate groups of uroporphyrinogen-III to yield coproporphyrinogen-III. This chain is Uroporphyrinogen decarboxylase, found in Shewanella piezotolerans (strain WP3 / JCM 13877).